Reading from the N-terminus, the 140-residue chain is Nucleoside diphosphate kinase (140 aa).

Lys11, Phe59, Arg87, Thr93, Arg104, and Asn114 together coordinate ATP. The active-site Pros-phosphohistidine intermediate is His117.

Belongs to the NDK family. As to quaternary structure, homotetramer. It depends on Mg(2+) as a cofactor.

The protein localises to the cytoplasm. The catalysed reaction is a 2'-deoxyribonucleoside 5'-diphosphate + ATP = a 2'-deoxyribonucleoside 5'-triphosphate + ADP. It carries out the reaction a ribonucleoside 5'-diphosphate + ATP = a ribonucleoside 5'-triphosphate + ADP. Major role in the synthesis of nucleoside triphosphates other than ATP. The ATP gamma phosphate is transferred to the NDP beta phosphate via a ping-pong mechanism, using a phosphorylated active-site intermediate. The polypeptide is Nucleoside diphosphate kinase (Mesorhizobium japonicum (strain LMG 29417 / CECT 9101 / MAFF 303099) (Mesorhizobium loti (strain MAFF 303099))).